The sequence spans 902 residues: HTH-type transcriptional regulator MalT (902 aa).

39 to 46 (SPAGYGKT) provides a ligand contact to ATP. The HTH luxR-type domain occupies 832–897 (ELVRTSPLTQ…EAVQTAEQLL (66 aa)). Residues 856–875 (NEQIAHELDVAGTTIKTHIR) constitute a DNA-binding region (H-T-H motif).

Belongs to the MalT family. Monomer in solution. Oligomerizes to an active state in the presence of the positive effectors ATP and maltotriose.

Activated by ATP and maltotriose, which are both required for DNA binding. Positively regulates the transcription of the maltose regulon whose gene products are responsible for uptake and catabolism of malto-oligosaccharides. Specifically binds to the promoter region of its target genes, recognizing a short DNA motif called the MalT box. This is HTH-type transcriptional regulator MalT from Vibrio cholerae serotype O1 (strain ATCC 39315 / El Tor Inaba N16961).